The primary structure comprises 196 residues: N-(5'-phosphoribosyl)anthranilate isomerase (196 aa).

The protein belongs to the TrpF family.

The catalysed reaction is N-(5-phospho-beta-D-ribosyl)anthranilate = 1-(2-carboxyphenylamino)-1-deoxy-D-ribulose 5-phosphate. The protein operates within amino-acid biosynthesis; L-tryptophan biosynthesis; L-tryptophan from chorismate: step 3/5. The sequence is that of N-(5'-phosphoribosyl)anthranilate isomerase from Sulfurovum sp. (strain NBC37-1).